A 185-amino-acid chain; its full sequence is uncharacterized protein (185 aa).

The N-terminal 56 residues, Met1–Asn56, are a transit peptide targeting the chloroplast. The interval Arg48 to Asn67 is disordered. The span at Ser52–Ser64 shows a compositional bias: polar residues. A coiled-coil region spans residues Gln105–Gln138.

The protein resides in the plastid. It localises to the chloroplast. It is found in the plastoglobule. This is an uncharacterized protein from Arabidopsis thaliana (Mouse-ear cress).